A 31-amino-acid polypeptide reads, in one-letter code: Cytochrome b6-f complex subunit 6 (31 aa).

A helical membrane pass occupies residues 4–26 (ITSYFGFLLAASTITPALLIGLS).

Belongs to the PetL family. As to quaternary structure, the 4 large subunits of the cytochrome b6-f complex are cytochrome b6, subunit IV (17 kDa polypeptide, PetD), cytochrome f and the Rieske protein, while the 4 small subunits are PetG, PetL, PetM and PetN. The complex functions as a dimer.

The protein resides in the plastid. It is found in the chloroplast thylakoid membrane. Functionally, component of the cytochrome b6-f complex, which mediates electron transfer between photosystem II (PSII) and photosystem I (PSI), cyclic electron flow around PSI, and state transitions. PetL is important for photoautotrophic growth as well as for electron transfer efficiency and stability of the cytochrome b6-f complex. This is Cytochrome b6-f complex subunit 6 from Liriodendron tulipifera (Tuliptree).